We begin with the raw amino-acid sequence, 576 residues long: Sulfite reductase [NADPH] hemoprotein beta-component (576 aa).

Over residues 1–12 (MDAKTQPDRSRD) the composition is skewed to basic and acidic residues. Positions 1–26 (MDAKTQPDRSRDVSQPLDKLGPDETL) are disordered. The [4Fe-4S] cluster site is built by Cys-441, Cys-447, Cys-486, and Cys-490. Residue Cys-490 participates in siroheme binding.

It belongs to the nitrite and sulfite reductase 4Fe-4S domain family. As to quaternary structure, alpha(8)-beta(8). The alpha component is a flavoprotein, the beta component is a hemoprotein. It depends on siroheme as a cofactor. Requires [4Fe-4S] cluster as cofactor.

The catalysed reaction is hydrogen sulfide + 3 NADP(+) + 3 H2O = sulfite + 3 NADPH + 4 H(+). The protein operates within sulfur metabolism; hydrogen sulfide biosynthesis; hydrogen sulfide from sulfite (NADPH route): step 1/1. In terms of biological role, component of the sulfite reductase complex that catalyzes the 6-electron reduction of sulfite to sulfide. This is one of several activities required for the biosynthesis of L-cysteine from sulfate. The protein is Sulfite reductase [NADPH] hemoprotein beta-component of Nitrobacter winogradskyi (strain ATCC 25391 / DSM 10237 / CIP 104748 / NCIMB 11846 / Nb-255).